Here is a 484-residue protein sequence, read N- to C-terminus: Arachin Ahy-3 (484 aa).

The first 20 residues, 1–20, serve as a signal peptide directing secretion; that stretch reads MAKLLALSVCFCFLVLGASS. 2 disulfide bridges follow: cysteine 32–cysteine 65 and cysteine 108–cysteine 305. The region spanning 35–253 is the Cupin type-1 1 domain; that stretch reads QRLNAQRPDN…GFQVNEDIVR (219 aa). The interval 208–233 is disordered; the sequence is QQRSGRQSPKGEEQEQEQENEGGNVF. A propeptide spanning residues 295–298 is cleaved from the precursor; that stretch reads DFNN. Residues 311 to 460 enclose the Cupin type-1 2 domain; that stretch reads MNIGKSTSAD…SYGLQYEQAR (150 aa). Positions 479 to 484 are excised as a propeptide; that stretch reads MIRTVA.

This sequence belongs to the 11S seed storage protein (globulins) family. In terms of assembly, hexamer; each subunit is composed of an acidic and a basic chain derived from a single precursor and linked by a disulfide bond.

The chain is Arachin Ahy-3 from Arachis hypogaea (Peanut).